A 349-amino-acid polypeptide reads, in one-letter code: MTDAPLVTAELPGSGGSLRRSPEDFRVDEVPAYLPSGAGPHLYLRVEKRGRTTRDALRTLARALGVPERDAGYAGLKDKDAVTTQWLSFPAARDPEPQALASEGLRVLEVSRHANKLRPGHVRANRFQLAVRGGDLARAQAAAAALAERGLPNLFGPQRFGTEGRNAEVGRALLLGDPSPEARRAARDRFLRRLSISAYQALLFNRWLAERMADGLFATAVAGDVLKKLDTGGLFTCADPAVDGPRVQRFEVSPAGPMFGHKLRAAEGEALAREERLLAAEGIQLSDFARGGGEAEGTRRAARLRVEVALAPLEDGYLATFELPKGSYATVVMRELMKAGAELPEADED.

A disordered region spans residues 1–22 (MTDAPLVTAELPGSGGSLRRSP). The active-site Nucleophile is the D78. The TRUD domain maps to 150 to 304 (GLPNLFGPQR…AEGTRRAARL (155 aa)).

This sequence belongs to the pseudouridine synthase TruD family.

It carries out the reaction uridine(13) in tRNA = pseudouridine(13) in tRNA. Responsible for synthesis of pseudouridine from uracil-13 in transfer RNAs. This chain is tRNA pseudouridine synthase D, found in Anaeromyxobacter sp. (strain Fw109-5).